Consider the following 1004-residue polypeptide: DNA-directed RNA polymerase subunit beta' (1004 aa).

Mg(2+)-binding residues include Asp-388, Asp-390, and Asp-392. Zn(2+) is bound by residues Cys-757, Cys-831, Cys-838, and Cys-841.

It belongs to the RNA polymerase beta' chain family. In terms of assembly, the RNAP catalytic core consists of 2 alpha, 1 beta, 1 beta' and 1 omega subunit. When a sigma factor is associated with the core the holoenzyme is formed, which can initiate transcription. Mg(2+) is required as a cofactor. It depends on Zn(2+) as a cofactor.

It carries out the reaction RNA(n) + a ribonucleoside 5'-triphosphate = RNA(n+1) + diphosphate. In terms of biological role, DNA-dependent RNA polymerase catalyzes the transcription of DNA into RNA using the four ribonucleoside triphosphates as substrates. The protein is DNA-directed RNA polymerase subunit beta' of Oenococcus oeni (Leuconostoc oenos).